The primary structure comprises 290 residues: MQPTVIETWPAPAKLNLFLYITGQRQDGYHLLQTLFQFLDYGDTLTIRPRNDDQINLLTPIDGVENEQNLIIRAARLLQQHCERRNIRPAQFGANIHIEKCLPMGGGLGGGSSNAATVLVALNHLWQSGLNVDTLAELGLQLGADVPVFIRGYAAFAEGIGEQLTPANPPEKWYLVAHPSISIATPLIFGDPELTRNSPVRDLETLLNQTFVNDCEAIARKRFREVEQLLSWLLEYAPARLTGTGACVFAEFDTEFAARQVLDQAPEWLNGFVARGVNVSPLQRRLSGQR.

Lysine 14 is a catalytic residue. 103-113 (PMGGGLGGGSS) serves as a coordination point for ATP. Residue aspartate 145 is part of the active site.

This sequence belongs to the GHMP kinase family. IspE subfamily. In terms of assembly, homodimer.

It catalyses the reaction 4-CDP-2-C-methyl-D-erythritol + ATP = 4-CDP-2-C-methyl-D-erythritol 2-phosphate + ADP + H(+). The protein operates within isoprenoid biosynthesis; isopentenyl diphosphate biosynthesis via DXP pathway; isopentenyl diphosphate from 1-deoxy-D-xylulose 5-phosphate: step 3/6. In terms of biological role, catalyzes the phosphorylation of the position 2 hydroxy group of 4-diphosphocytidyl-2C-methyl-D-erythritol. This chain is 4-diphosphocytidyl-2-C-methyl-D-erythritol kinase, found in Pectobacterium atrosepticum (strain SCRI 1043 / ATCC BAA-672) (Erwinia carotovora subsp. atroseptica).